A 281-amino-acid polypeptide reads, in one-letter code: Probable feruloyl esterase A (281 aa).

Residues 1–21 (MKQFSAKFALALSAAAGQALA) form the signal peptide. 3 disulfides stabilise this stretch: C50-C279, C112-C115, and C248-C255. D98 serves as a coordination point for substrate. A glycan (N-linked (GlcNAc...) asparagine) is linked at N100. Position 101 (Y101) interacts with substrate. The active-site Nucleophile is S154. N-linked (GlcNAc...) asparagine glycosylation is present at N173. The Charge relay system role is filled by D215. Position 268 (H268) interacts with substrate. Catalysis depends on H268, which acts as the Charge relay system.

The protein belongs to the AB hydrolase superfamily. FaeA family.

The protein resides in the secreted. It carries out the reaction feruloyl-polysaccharide + H2O = ferulate + polysaccharide.. Its function is as follows. Involved in degradation of plant cell walls. Hydrolyzes the feruloyl-arabinose ester bond in arabinoxylans, and the feruloyl-galactose ester bond in pectin. The sequence is that of Probable feruloyl esterase A (faeA) from Aspergillus terreus (strain NIH 2624 / FGSC A1156).